The primary structure comprises 431 residues: Phosphoribosylamine--glycine ligase (431 aa).

The ATP-grasp domain maps to 109–316 (KDFLARHGIP…LVDLLEAAID (208 aa)). 135–196 (VREKGTPIVV…EEFLDGEEAS (62 aa)) provides a ligand contact to ATP. Residues Glu286 and Asn288 each coordinate Mg(2+).

This sequence belongs to the GARS family. The cofactor is Mg(2+). Requires Mn(2+) as cofactor.

The catalysed reaction is 5-phospho-beta-D-ribosylamine + glycine + ATP = N(1)-(5-phospho-beta-D-ribosyl)glycinamide + ADP + phosphate + H(+). Its pathway is purine metabolism; IMP biosynthesis via de novo pathway; N(1)-(5-phospho-D-ribosyl)glycinamide from 5-phospho-alpha-D-ribose 1-diphosphate: step 2/2. The protein is Phosphoribosylamine--glycine ligase of Xanthomonas axonopodis pv. citri (strain 306).